The sequence spans 338 residues: 3-keto-steroid reductase erg27 (338 aa).

4 residues coordinate NADP(+): leucine 16, threonine 44, lysine 50, and aspartate 75. Active-site proton donor residues include serine 180 and tyrosine 203. Residues tyrosine 203, lysine 207, and threonine 236 each coordinate NADP(+). The active-site Lowers pKa of active site Tyr is lysine 207.

The protein belongs to the short-chain dehydrogenases/reductases (SDR) family. ERG27 subfamily. As to quaternary structure, heterotetramer of erg25, erg26, erg27 and erg28. Erg28 acts as a scaffold to tether erg27 and other 4,4-demethylation-related enzymes, forming a demethylation enzyme complex, in the endoplasmic reticulum.

It catalyses the reaction 3-dehydro-4alpha-methylzymosterol + NADPH + H(+) = 4alpha-methylzymosterol + NADP(+). Its pathway is steroid biosynthesis; zymosterol biosynthesis; zymosterol from lanosterol: step 5/6. It functions in the pathway steroid metabolism; ergosterol biosynthesis. In terms of biological role, 3-keto-steroid reductase; part of the third module of ergosterol biosynthesis pathway that includes by the late steps of the pathway. Erg27 is a catalytic component of the C-4 demethylation complex that catalyze the reduction of the keto group on the C-3. The third module or late pathway involves the ergosterol synthesis itself through consecutive reactions that mainly occur in the endoplasmic reticulum (ER) membrane. Firstly, the squalene synthase erg9 catalyzes the condensation of 2 farnesyl pyrophosphate moieties to form squalene, which is the precursor of all steroids. Secondly, squalene is converted into lanosterol by the consecutive action of the squalene epoxidase erg1 and the lanosterol synthase erg7. The lanosterol 14-alpha-demethylase erg11/cyp1 catalyzes C14-demethylation of lanosterol to produce 4,4'-dimethyl cholesta-8,14,24-triene-3-beta-ol. In the next steps, a complex process involving various demethylation, reduction and desaturation reactions catalyzed by the C-14 reductase erg24 and the C-4 demethylation complex erg25-erg26-erg27 leads to the production of zymosterol. Erg28 likely functions in the C-4 demethylation complex reaction by tethering erg26 and Erg27 to the endoplasmic reticulum or to facilitate interaction between these proteins. Then, the sterol 24-C-methyltransferase erg6 catalyzes the methyl transfer from S-adenosyl-methionine to the C-24 of zymosterol to form fecosterol. The C-8 sterol isomerase erg2 catalyzes the reaction which results in unsaturation at C-7 in the B ring of sterols and thus converts fecosterol to episterol. The sterol-C5-desaturases erg31 and erg32 then catalyze the introduction of a C-5 double bond in the B ring to produce 5-dehydroepisterol. The C-22 sterol desaturase erg5 further converts 5-dehydroepisterol into ergosta-5,7,22,24(28)-tetraen-3beta-ol by forming the C-22(23) double bond in the sterol side chain. Finally, ergosta-5,7,22,24(28)-tetraen-3beta-ol is substrate of the C-24(28) sterol reductase erg4 to produce ergosterol. In the genus Schizosaccharomyces, a second route exists between lanosterol and fecosterol, via the methylation of lanosterol to eburicol by erg6, followed by C14-demethylation by erg11/cyp1 and C4-demethylation by the demethylation complex erg25-erg26-erg27. This chain is 3-keto-steroid reductase erg27, found in Schizosaccharomyces pombe (strain 972 / ATCC 24843) (Fission yeast).